We begin with the raw amino-acid sequence, 2641 residues long: Prosolanapyrone synthase (2641 aa).

The Ketosynthase family 3 (KS3) domain occupies 14–440 (PEPIAIVGMG…GANGHCIIDD (427 aa)). Active-site for beta-ketoacyl synthase activity residues include cysteine 187, histidine 323, and histidine 363. The segment at 456–515 (SIGHINGHTNGHTNGHTNGHTNGHTNGHTNGHTNGAHASDGHNGHHQNGMNGNSASHMSE) is disordered. Positions 461-490 (NGHTNGHTNGHTNGHTNGHTNGHTNGHTNG) are enriched in low complexity. The tract at residues 619–920 (FVFTGQGAQW…KGPVGQISRS (302 aa)) is malonyl-CoA:ACP transacylase (MAT). Positions 1011–1149 (HDLLGSKLPG…GRVRVIAGTS (139 aa)) are N-terminal hotdog fold. The tract at residues 1011–1309 (HDLLGSKLPG…GNLRCVTYTE (299 aa)) is dehydratase (DH) domain. The PKS/mFAS DH domain occupies 1011-1313 (HDLLGSKLPG…CVTYTEVLPS (303 aa)). Residue histidine 1043 is the Proton acceptor; for dehydratase activity of the active site. Residues 1161 to 1313 (ARTLDTKAWY…CVTYTEVLPS (153 aa)) are C-terminal hotdog fold. The Proton donor; for dehydratase activity role is filled by aspartate 1227. The tract at residues 1477 to 1665 (TGAYPQLVRF…GAELVLDDYP (189 aa)) is methyltransferase (MT) domain. The enoyl reductase (ER) domain stretch occupies residues 1894-2206 (GLLTSLYFKP…KGTHVGKLVV (313 aa)). The ketoreductase (KR) domain stretch occupies residues 2231 to 2408 (NYLITGGLGG…STVSFGLIRD (178 aa)). In terms of domain architecture, Carrier spans 2561–2639 (RTVALVTDAI…ILANKIVDGA (79 aa)). Serine 2598 is subject to O-(pantetheine 4'-phosphoryl)serine.

It functions in the pathway phytotoxin biosynthesis. Its function is as follows. Prosolanapyrone synthase; part of the gene cluster that mediates the biosynthesis of the phytotoxin solanapyrone, a causal agent of early blight disease of potato and tomato. The prosolanapyrone synthase sol1 is a polyketide synthase that produces the octaketide desmethylprosolanapyrone I via sequential condensations of 7 malonyl-CoA units with one acetyl-CoA unit, and one methylation step. The octaketide backbone is further methylated by the sol2 O-methyltransferase to yield prosolanapyrone I. Prosolanapyrone I is hydroxylated to prosolanapyrone II by the cytochrome P450 monooxygenase sol6. The solanapyrone synthase sol5 then catalyzes the oxidation of prosolanapyrone II and the subsequent Diels Alder cycloisomerization of the product prosolanapyrone III to solanapyrones A and D. Solanapyrones A and D are then converted into solanapyrones B and E, respectively, by the sol3 dehydrogenase. The protein is Prosolanapyrone synthase (sol1) of Alternaria solani.